The following is a 285-amino-acid chain: 3-methyl-2-oxobutanoate hydroxymethyltransferase (285 aa).

The interval 1-23 is disordered; sequence MSEHNVYGAAQPAQPAQPAQPRT. The segment covering 9–21 has biased composition (low complexity); that stretch reads AAQPAQPAQPAQP. Residues Asp-66 and Asp-105 each coordinate Mg(2+). 3-methyl-2-oxobutanoate-binding positions include 66-67, Asp-105, and Lys-135; that span reads DS. Glu-137 serves as a coordination point for Mg(2+). The active-site Proton acceptor is the Glu-203.

It belongs to the PanB family. As to quaternary structure, homodecamer; pentamer of dimers. Requires Mg(2+) as cofactor.

The protein resides in the cytoplasm. The enzyme catalyses 3-methyl-2-oxobutanoate + (6R)-5,10-methylene-5,6,7,8-tetrahydrofolate + H2O = 2-dehydropantoate + (6S)-5,6,7,8-tetrahydrofolate. The protein operates within cofactor biosynthesis; (R)-pantothenate biosynthesis; (R)-pantoate from 3-methyl-2-oxobutanoate: step 1/2. In terms of biological role, catalyzes the reversible reaction in which hydroxymethyl group from 5,10-methylenetetrahydrofolate is transferred onto alpha-ketoisovalerate to form ketopantoate. This Mycobacterium avium (strain 104) protein is 3-methyl-2-oxobutanoate hydroxymethyltransferase.